Here is a 216-residue protein sequence, read N- to C-terminus: MSNTGITLALSKGRIFDETLPLLAAAGITPAESPESSRKLIIGTNRDDVRLIIVRASDVPTYVQYGAADLGIAGKDVLNEHGGRGLYQPLDLQIAKCRMMVAVREGYDYAGTVKQGARIRVATKYVNAARDHFASKGVHIDLIKLYGSMELAPLVGLSDVIVDLVSTGGTLKANGLAAVEHICDISSRLVVNQAALKLKRSVIQPVVDAFAAAVAR.

This sequence belongs to the ATP phosphoribosyltransferase family. Short subfamily. Heteromultimer composed of HisG and HisZ subunits.

Its subcellular location is the cytoplasm. It carries out the reaction 1-(5-phospho-beta-D-ribosyl)-ATP + diphosphate = 5-phospho-alpha-D-ribose 1-diphosphate + ATP. The protein operates within amino-acid biosynthesis; L-histidine biosynthesis; L-histidine from 5-phospho-alpha-D-ribose 1-diphosphate: step 1/9. Functionally, catalyzes the condensation of ATP and 5-phosphoribose 1-diphosphate to form N'-(5'-phosphoribosyl)-ATP (PR-ATP). Has a crucial role in the pathway because the rate of histidine biosynthesis seems to be controlled primarily by regulation of HisG enzymatic activity. This Thiobacillus denitrificans (strain ATCC 25259 / T1) protein is ATP phosphoribosyltransferase.